Here is a 1094-residue protein sequence, read N- to C-terminus: Probable arabinosyltransferase C (1094 aa).

The next 13 helical transmembrane spans lie at 28–50 (IARYVAVVAGLLGAVLAIATPLL), 232–251 (AAMILGVALTGAALVALHIL), 264–286 (PARWWSTGGLDTLVIAVLVWWHF), 341–360 (SIWMRLPTLAMALTCWWVIS), 373–392 (TSRAAAWTAAGMFLAVWLPL), 431–453 (IGALTLFSGPTGIASIGALLVAI), 466–488 (RFGVLPLVAPILAAATVTAIPIF), 530–552 (SIARRFAVLALVLALAVSVAMSL), 565–582 (SRRIIGITIISFLAMMFT), 586–608 (WTHHFGVFAGLAGSLGALAAVAV), 620–642 (TVFAAVVVFVLALSFASVNGWWY), 657–679 (WRWSLTTALLELTVLVLLLAAWF), and 700–722 (LAGIVQSPLAIATWLLVLFEVVS). Low complexity predominate over residues 817–831 (GSEPGTEGGTTAAPG). Positions 817-836 (GSEPGTEGGTTAAPGINGSR) are disordered.

Belongs to the emb family.

The protein localises to the cell membrane. In terms of biological role, arabinosyl transferase responsible for the polymerization of arabinose into the arabinan of arabinogalactan. This is Probable arabinosyltransferase C (embC) from Mycobacterium tuberculosis (strain ATCC 25618 / H37Rv).